The sequence spans 301 residues: GTP cyclohydrolase FolE2 (301 aa).

The protein belongs to the GTP cyclohydrolase IV family.

It catalyses the reaction GTP + H2O = 7,8-dihydroneopterin 3'-triphosphate + formate + H(+). It participates in cofactor biosynthesis; 7,8-dihydroneopterin triphosphate biosynthesis; 7,8-dihydroneopterin triphosphate from GTP: step 1/1. Functionally, converts GTP to 7,8-dihydroneopterin triphosphate. This chain is GTP cyclohydrolase FolE2, found in Pseudomonas putida (strain GB-1).